Consider the following 438-residue polypeptide: Transposon Ty2-F Gag polyprotein (438 aa).

Composition is skewed to polar residues over residues 1-11 (MESQQLHQNPH), 19-39 (ASVT…SASN), and 49-60 (KVNSQQETTPGT). Disordered regions lie at residues 1 to 86 (MESQ…GQYQ), 366 to 397 (VSRT…AKAH), and 419 to 438 (SSQY…TERI). Positions 295-397 (ENNINVSDRL…SSKPRAAKAH (103 aa)) are RNA-binding. The span at 369–381 (TSPNTTNTKVTTR) shows a compositional bias: low complexity.

As to quaternary structure, homotrimer.

It localises to the cytoplasm. Capsid protein (CA) is the structural component of the virus-like particle (VLP), forming the shell that encapsulates the retrotransposons dimeric RNA genome. The particles are assembled from trimer-clustered units and there are holes in the capsid shells that allow for the diffusion of macromolecules. CA also has nucleocapsid-like chaperone activity, promoting primer tRNA(i)-Met annealing to the multipartite primer-binding site (PBS), dimerization of Ty2 RNA and initiation of reverse transcription. The chain is Transposon Ty2-F Gag polyprotein (TY2A-F) from Saccharomyces cerevisiae (strain ATCC 204508 / S288c) (Baker's yeast).